Reading from the N-terminus, the 66-residue chain is U8-myrmicitoxin-Tb1a (66 aa).

A signal peptide spans 1–26; that stretch reads MKLSFLSLAFAVIFVMAIMYAPQVEA. A propeptide spanning residues 27–50 is cleaved from the precursor; that stretch reads KASADADADADAAASADALAKASA.

Expressed by the venom gland.

The protein resides in the secreted. Functionally, in vivo, this neurotoxin paralyzes about 50% of blowflies (L.caesar) one hour after intrathoracic injection, when tested at high doses (54 nmol/g). This is U8-myrmicitoxin-Tb1a from Tetramorium bicarinatum (Tramp ant).